The sequence spans 282 residues: Bifunctional protein FolD (282 aa).

NADP(+) contacts are provided by residues 165–167 (GAS) and isoleucine 231.

This sequence belongs to the tetrahydrofolate dehydrogenase/cyclohydrolase family. In terms of assembly, homodimer.

It catalyses the reaction (6R)-5,10-methylene-5,6,7,8-tetrahydrofolate + NADP(+) = (6R)-5,10-methenyltetrahydrofolate + NADPH. The enzyme catalyses (6R)-5,10-methenyltetrahydrofolate + H2O = (6R)-10-formyltetrahydrofolate + H(+). It functions in the pathway one-carbon metabolism; tetrahydrofolate interconversion. Its function is as follows. Catalyzes the oxidation of 5,10-methylenetetrahydrofolate to 5,10-methenyltetrahydrofolate and then the hydrolysis of 5,10-methenyltetrahydrofolate to 10-formyltetrahydrofolate. This Francisella tularensis subsp. novicida (strain U112) protein is Bifunctional protein FolD.